A 161-amino-acid chain; its full sequence is Nucleotide-binding protein BceJ2315_27070 (161 aa).

It belongs to the YajQ family.

In terms of biological role, nucleotide-binding protein. This is Nucleotide-binding protein BceJ2315_27070 from Burkholderia cenocepacia (strain ATCC BAA-245 / DSM 16553 / LMG 16656 / NCTC 13227 / J2315 / CF5610) (Burkholderia cepacia (strain J2315)).